We begin with the raw amino-acid sequence, 155 residues long: Myelin basic protein (155 aa).

The tract at residues 1–72 (MASATTSDHA…HQGARRQTDD (72 aa)) is disordered. Position 2 is an N-acetylalanine; in forms C1, C2, C3 and C8 (Ala-2). Position 12 is a deamidated glutamine; in forms C1, C2 and C3 (Gln-12). Over residues 37 to 49 (GSRKVPEKGKEPA) the composition is skewed to basic and acidic residues. Phosphoserine; in forms C1, C2 and C3 occurs at positions 73 and 84. The interval 113–155 (RAHYGAAGSSKSKDGFRGRRDGSGTLSSFFKMGKKGEGSPARR) is disordered. Ser-121 and Ser-122 each carry phosphoserine; in forms C1 and C3. The span at 123–134 (KSKDGFRGRRDG) shows a compositional bias: basic and acidic residues. 3 positions are modified to phosphoserine; in forms C1, C2 and C3: Ser-135, Ser-139, and Ser-140.

Belongs to the myelin basic protein family. Several charge isomers are produced as a result of optional post-translational modifications, such as phosphorylation, deamidation and citrullination. Dogfish MBP contains four major components designated as C1, C2, C3 and C8. C1 and C3, but not C2 are phosphorylated at either Ser-121 or Ser-122; C2 is phosphorylated at 2 or 3 sites among Ser-135, Ser-139 and Ser-140. Hydroxyproline and citrulline are present but were not identified in either C1, C2 or C3, which suggests their presence in C8.

It localises to the myelin membrane. In terms of biological role, this protein may function to maintain proper structure of myelin. The sequence is that of Myelin basic protein (MBP) from Squalus acanthias (Spiny dogfish).